Reading from the N-terminus, the 133-residue chain is Ribonuclease VapC28 (133 aa).

Residues Met1–Thr124 enclose the PINc domain. Mg(2+)-binding residues include Asp4 and Asp100.

Belongs to the PINc/VapC protein family. Mg(2+) is required as a cofactor.

In terms of biological role, toxic component of a type II toxin-antitoxin (TA) system. An RNase. Upon expression in M.smegmatis inhibits colony formation. Its toxic effect is neutralized by coexpression with cognate antitoxin VapB28. This chain is Ribonuclease VapC28, found in Mycobacterium tuberculosis (strain ATCC 25618 / H37Rv).